We begin with the raw amino-acid sequence, 379 residues long: Cytochrome b (379 aa).

4 helical membrane-spanning segments follow: residues 34–54 (YGSL…MLAM), 78–100 (WMIR…VHIG), 113–133 (TWNI…LGYV), and 179–199 (FFSL…IHLL). Residues His-84 and His-98 each coordinate heme b. Heme b contacts are provided by His-183 and His-197. Residue His-202 participates in a ubiquinone binding. 4 helical membrane-spanning segments follow: residues 225–245 (FSIK…FLVL), 289–309 (LGGV…PIFS), 320–340 (WSGM…WIGA), and 345–365 (APYI…FFWM).

The protein belongs to the cytochrome b family. In terms of assembly, the main subunits of complex b-c1 are: cytochrome b, cytochrome c1 and the Rieske protein. Requires heme b as cofactor.

The protein resides in the mitochondrion inner membrane. In terms of biological role, component of the ubiquinol-cytochrome c reductase complex (complex III or cytochrome b-c1 complex) that is part of the mitochondrial respiratory chain. The b-c1 complex mediates electron transfer from ubiquinol to cytochrome c. Contributes to the generation of a proton gradient across the mitochondrial membrane that is then used for ATP synthesis. This is Cytochrome b (mt:Cyt-b) from Epiperipatus biolleyi (Velvet worm).